The sequence spans 157 residues: Cyclic pyranopterin monophosphate synthase (157 aa).

Substrate-binding positions include 74–76 (MCH) and 112–113 (ME). Residue Asp127 is part of the active site.

It belongs to the MoaC family. In terms of assembly, homohexamer; trimer of dimers.

The catalysed reaction is (8S)-3',8-cyclo-7,8-dihydroguanosine 5'-triphosphate = cyclic pyranopterin phosphate + diphosphate. The protein operates within cofactor biosynthesis; molybdopterin biosynthesis. Its function is as follows. Catalyzes the conversion of (8S)-3',8-cyclo-7,8-dihydroguanosine 5'-triphosphate to cyclic pyranopterin monophosphate (cPMP). This chain is Cyclic pyranopterin monophosphate synthase, found in Campylobacter jejuni subsp. jejuni serotype O:2 (strain ATCC 700819 / NCTC 11168).